A 481-amino-acid chain; its full sequence is Glucan endo-1,3-beta-glucosidase 8 (481 aa).

The N-terminal stretch at 1 to 33 (MSNLLALVVGFVIVIGHLGILVNGLGVNWGTMA) is a signal peptide. Asn99 and Asn110 each carry an N-linked (GlcNAc...) asparagine glycan. Catalysis depends on Glu119, which acts as the Proton donor. Residues Asn126 and Asn131 are each glycosylated (N-linked (GlcNAc...) asparagine). The active-site Nucleophile is Glu265. A disulfide bridge links Cys367 with Cys428. N-linked (GlcNAc...) asparagine glycans are attached at residues Asn409 and Asn440. Ser455 is lipidated: GPI-anchor amidated serine. A propeptide spans 456 to 481 (SASSFSCSSYSLVVLIVWFLLSGMMF) (removed in mature form).

Belongs to the glycosyl hydrolase 17 family. In terms of processing, contains two additional disulfide bonds.

It localises to the secreted. It is found in the cell wall. The protein resides in the cell membrane. It catalyses the reaction Hydrolysis of (1-&gt;3)-beta-D-glucosidic linkages in (1-&gt;3)-beta-D-glucans.. The polypeptide is Glucan endo-1,3-beta-glucosidase 8 (Arabidopsis thaliana (Mouse-ear cress)).